Reading from the N-terminus, the 159-residue chain is MKIKLVTVGKLKEKYLKEGIAEYSKRLSRFTKVEIIELADEKTPDKASPLENQQILSKEGERILSKVLDREFVIVLAIEGQQFPSEKFSKVIEDASVRGFSDITFIIGGSLGLSAKVKERANLLMSFGQLTLPHQLMRLVLMEQIYRAFMIQQGSPYHK.

S-adenosyl-L-methionine contacts are provided by residues L76, G108, and 127 to 132 (FGQLTL).

The protein belongs to the RNA methyltransferase RlmH family. Homodimer.

The protein resides in the cytoplasm. The enzyme catalyses pseudouridine(1915) in 23S rRNA + S-adenosyl-L-methionine = N(3)-methylpseudouridine(1915) in 23S rRNA + S-adenosyl-L-homocysteine + H(+). Its function is as follows. Specifically methylates the pseudouridine at position 1915 (m3Psi1915) in 23S rRNA. The sequence is that of Ribosomal RNA large subunit methyltransferase H from Streptococcus gordonii (strain Challis / ATCC 35105 / BCRC 15272 / CH1 / DL1 / V288).